Consider the following 467-residue polypeptide: MTCRTRFAPSPTGYLHIGGARTALYCWLEARRRNGQFLLRIEDTDRERSTQAAIDAILHAMDWLGLDYDEPPVYQTQRIERYNQVAARLLAEGKAYYAYDSKDTLNAMREAALRTGEKPRYNGAAREANLPYRDDPNRVIRFKNPHTGTVAFDDLIKGRIQIANSELDDMVILRPDGYPTYNFAVVVDDWDMNITEVIRGDDHINNTPRQINLYHALGAPLPTFAHLPMILDEQGAKLSKRTGAADVMQYRDSGYLPHALINYLVRLGWSHGDQELFNRQALIDLFQINDVNSKAARLDMAKLGWVNQHYLKTDDPATLAPPLVWHLEQRGIDVSAGPAPTDVILALRERVQTLKEMAEKAEIWYCPLQRYDEIAVAKHLKPGAETALLHARTLLAALPAWTVDNVDTALRTIATTLEIGMGKVAQPLRVAITGTQVSPDIAYTVYLTGRNEALKRIDAALIKISTA.

Positions 9–19 (PSPTGYLHIGG) match the 'HIGH' region motif. A 'KMSKS' region motif is present at residues 237 to 241 (KLSKR). Position 240 (Lys-240) interacts with ATP.

Belongs to the class-I aminoacyl-tRNA synthetase family. Glutamate--tRNA ligase type 1 subfamily. Monomer.

It is found in the cytoplasm. The catalysed reaction is tRNA(Glu) + L-glutamate + ATP = L-glutamyl-tRNA(Glu) + AMP + diphosphate. Catalyzes the attachment of glutamate to tRNA(Glu) in a two-step reaction: glutamate is first activated by ATP to form Glu-AMP and then transferred to the acceptor end of tRNA(Glu). This is Glutamate--tRNA ligase from Xylella fastidiosa (strain M12).